We begin with the raw amino-acid sequence, 204 residues long: High frequency lysogenization protein HflD homolog (204 aa).

This sequence belongs to the HflD family.

The protein localises to the cytoplasm. The protein resides in the cell inner membrane. The protein is High frequency lysogenization protein HflD homolog of Ruthia magnifica subsp. Calyptogena magnifica.